Reading from the N-terminus, the 175-residue chain is RNA pyrophosphohydrolase (175 aa).

A Nudix hydrolase domain is found at Gly6 to Lys150. Residues Gly38–Gly59 carry the Nudix box motif.

Belongs to the Nudix hydrolase family. RppH subfamily. A divalent metal cation serves as cofactor.

Its function is as follows. Accelerates the degradation of transcripts by removing pyrophosphate from the 5'-end of triphosphorylated RNA, leading to a more labile monophosphorylated state that can stimulate subsequent ribonuclease cleavage. The polypeptide is RNA pyrophosphohydrolase (Aeromonas hydrophila subsp. hydrophila (strain ATCC 7966 / DSM 30187 / BCRC 13018 / CCUG 14551 / JCM 1027 / KCTC 2358 / NCIMB 9240 / NCTC 8049)).